A 454-amino-acid chain; its full sequence is F-box/WD-40 repeat-containing protein At3g52030 (454 aa).

Residues 20 to 66 form the F-box domain; it reads PTSIESLDADILCIIFSFLDLFDLVHCTVVCNSWNAVIKRLKLLQAS. 8 WD repeats span residues 85 to 116, 117 to 153, 170 to 214, 215 to 255, 258 to 296, 301 to 340, 343 to 383, and 422 to 454; these read DRPA…RWEA, HSHR…CMEE, SKKL…SIFP, SRAG…CSQI, TQGG…PVAT, ITAG…RLWE, VSPN…VLSR, and KVRP…FNLS.

This is F-box/WD-40 repeat-containing protein At3g52030 from Arabidopsis thaliana (Mouse-ear cress).